The sequence spans 404 residues: Dual-specificity RNA methyltransferase RlmN (404 aa).

E119 (proton acceptor) is an active-site residue. Residues V126 to R358 form the Radical SAM core domain. C133 and C369 form a disulfide bridge. The [4Fe-4S] cluster site is built by C140, C144, and C147. S-adenosyl-L-methionine-binding positions include G195–E196, S227, S249–H251, and N326. The active-site S-methylcysteine intermediate is the C369.

It belongs to the radical SAM superfamily. RlmN family. Requires [4Fe-4S] cluster as cofactor.

It localises to the cytoplasm. It catalyses the reaction adenosine(2503) in 23S rRNA + 2 reduced [2Fe-2S]-[ferredoxin] + 2 S-adenosyl-L-methionine = 2-methyladenosine(2503) in 23S rRNA + 5'-deoxyadenosine + L-methionine + 2 oxidized [2Fe-2S]-[ferredoxin] + S-adenosyl-L-homocysteine. The catalysed reaction is adenosine(37) in tRNA + 2 reduced [2Fe-2S]-[ferredoxin] + 2 S-adenosyl-L-methionine = 2-methyladenosine(37) in tRNA + 5'-deoxyadenosine + L-methionine + 2 oxidized [2Fe-2S]-[ferredoxin] + S-adenosyl-L-homocysteine. Functionally, specifically methylates position 2 of adenine 2503 in 23S rRNA and position 2 of adenine 37 in tRNAs. m2A2503 modification seems to play a crucial role in the proofreading step occurring at the peptidyl transferase center and thus would serve to optimize ribosomal fidelity. The sequence is that of Dual-specificity RNA methyltransferase RlmN from Caulobacter sp. (strain K31).